The primary structure comprises 286 residues: AB hydrolase superfamily protein YfhM (286 aa).

The region spanning 27-272 (PLIVLLHGFP…ASHWINHEKP (246 aa)) is the AB hydrolase-1 domain. Catalysis depends on Asp-103, which acts as the Nucleophile. The active-site Proton donor is Tyr-210. The Proton acceptor role is filled by His-265.

This sequence belongs to the AB hydrolase superfamily. Epoxide hydrolase family.

The sequence is that of AB hydrolase superfamily protein YfhM (yfhM) from Bacillus subtilis (strain 168).